We begin with the raw amino-acid sequence, 1288 residues long: 5-oxoprolinase (1288 aa).

T151 bears the Phosphothreonine mark. Positions 1249–1269 are disordered; it reads GGGGYGDPEDPAPLPGSPLQP. A Phosphoserine modification is found at S1265.

Belongs to the oxoprolinase family. In terms of assembly, homodimer. In terms of tissue distribution, expressed in coronary artery and kidney.

The protein resides in the cytoplasm. Its subcellular location is the cytosol. The catalysed reaction is 5-oxo-L-proline + ATP + 2 H2O = L-glutamate + ADP + phosphate + H(+). In terms of biological role, catalyzes the cleavage of 5-oxo-L-proline to form L-glutamate coupled to the hydrolysis of ATP to ADP and inorganic phosphate. This Bos taurus (Bovine) protein is 5-oxoprolinase (OPLAH).